A 664-amino-acid polypeptide reads, in one-letter code: ATP-dependent RNA helicase MSS116, mitochondrial (664 aa).

The N-terminal 26 residues, 1–26, are a transit peptide targeting the mitochondrion; sequence MLTSILIKGRTPVLASRNLLAALSNC. The tract at residues 42–79 is disordered; sequence NRDQRNFGRNQRNNNSNRYRNSRFNSRPRTRSREDDDE. Positions 48–68 are enriched in low complexity; that stretch reads FGRNQRNNNSNRYRNSRFNSR. The short motif at 106–134 is the Q motif element; the sequence is SLLEEGVLDKEIHKAITRMEFPGLTPVQQ. Residues 139-326 enclose the Helicase ATP-binding domain; that stretch reads PILSSEDHDV…NNIMNKKECL (188 aa). 152 to 159 provides a ligand contact to ATP; sequence AKTGTGKT. A DEAD box motif is present at residues 267 to 270; it reads DEAD. The Helicase C-terminal domain occupies 355–512; the sequence is SIFAAVEHIK…EKYEPSEEIK (158 aa). Positions 602–664 are disordered; that stretch reads GNNKSYDYDD…NYSSRNSNIY (63 aa). Basic and acidic residues predominate over residues 628 to 638; that stretch reads QNRDYDDEPFR. Residues 639–649 are compositionally biased toward low complexity; that stretch reads RSNNNRRSFSR. Residues 653 to 664 show a composition bias toward polar residues; it reads KNNYSSRNSNIY.

It belongs to the DEAD box helicase family. DDX18/HAS1 subfamily.

The protein resides in the mitochondrion matrix. The enzyme catalyses ATP + H2O = ADP + phosphate + H(+). Functionally, ATP-dependent RNA helicase required for mitochondrial splicing of group I and II introns. Specifically involved in the ATP-dependent splicing of the bl1 intron of COB. Also required for efficient mitochondrial translation. The sequence is that of ATP-dependent RNA helicase MSS116, mitochondrial (MSS116) from Saccharomyces cerevisiae (strain ATCC 204508 / S288c) (Baker's yeast).